The primary structure comprises 182 residues: Transcription termination/antitermination protein NusG (182 aa).

In terms of domain architecture, KOW spans Val-130 to Ser-161.

This sequence belongs to the NusG family.

Its function is as follows. Participates in transcription elongation, termination and antitermination. This Vibrio vulnificus (strain CMCP6) protein is Transcription termination/antitermination protein NusG.